Here is a 1076-residue protein sequence, read N- to C-terminus: Carbamoyl phosphate synthase large chain (1076 aa).

A carboxyphosphate synthetic domain region spans residues 1–402 (MPKREDIRKI…ALQKAIRSLE (402 aa)). ATP contacts are provided by Arg129, Arg169, Gly175, Gly176, Glu208, Val210, Glu215, Gly241, Val242, His243, Gln285, and Glu299. The ATP-grasp 1 domain occupies 133 to 328 (KEAMRKIGLD…IAKIAAKLAV (196 aa)). Positions 285, 299, and 301 each coordinate Mg(2+). Mn(2+)-binding residues include Gln285, Glu299, and Asn301. The tract at residues 403–555 (IGRYGLGCDG…YSTYEDENEA (153 aa)) is oligomerization domain. Residues 556–939 (LRSERKKVMI…YKAELAAGMK (384 aa)) are carbamoyl phosphate synthetic domain. The ATP-grasp 2 domain maps to 680-871 (AELLERLNIP…LAKIAAKLMM (192 aa)). Positions 716, 755, 757, 762, 787, 788, 789, 790, 830, and 842 each coordinate ATP. Residues Gln830, Glu842, and Asn844 each coordinate Mg(2+). Gln830, Glu842, and Asn844 together coordinate Mn(2+). In terms of domain architecture, MGS-like spans 938 to 1076 (MKLPLKGTVF…KSIQEYHEES (139 aa)). Residues 940–1076 (LPLKGTVFIS…KSIQEYHEES (137 aa)) form an allosteric domain region.

The protein belongs to the CarB family. In terms of assembly, composed of two chains; the small (or glutamine) chain promotes the hydrolysis of glutamine to ammonia, which is used by the large (or ammonia) chain to synthesize carbamoyl phosphate. Tetramer of heterodimers (alpha,beta)4. Mg(2+) serves as cofactor. Mn(2+) is required as a cofactor.

The catalysed reaction is hydrogencarbonate + L-glutamine + 2 ATP + H2O = carbamoyl phosphate + L-glutamate + 2 ADP + phosphate + 2 H(+). It catalyses the reaction hydrogencarbonate + NH4(+) + 2 ATP = carbamoyl phosphate + 2 ADP + phosphate + 2 H(+). Its pathway is amino-acid biosynthesis; L-arginine biosynthesis; carbamoyl phosphate from bicarbonate: step 1/1. It participates in pyrimidine metabolism; UMP biosynthesis via de novo pathway; (S)-dihydroorotate from bicarbonate: step 1/3. Functionally, large subunit of the glutamine-dependent carbamoyl phosphate synthetase (CPSase). CPSase catalyzes the formation of carbamoyl phosphate from the ammonia moiety of glutamine, carbonate, and phosphate donated by ATP, constituting the first step of 2 biosynthetic pathways, one leading to arginine and/or urea and the other to pyrimidine nucleotides. The large subunit (synthetase) binds the substrates ammonia (free or transferred from glutamine from the small subunit), hydrogencarbonate and ATP and carries out an ATP-coupled ligase reaction, activating hydrogencarbonate by forming carboxy phosphate which reacts with ammonia to form carbamoyl phosphate. The chain is Carbamoyl phosphate synthase large chain from Archaeoglobus fulgidus (strain ATCC 49558 / DSM 4304 / JCM 9628 / NBRC 100126 / VC-16).